Here is a 141-residue protein sequence, read N- to C-terminus: ATP synthase epsilon chain (141 aa).

Belongs to the ATPase epsilon chain family. In terms of assembly, F-type ATPases have 2 components, CF(1) - the catalytic core - and CF(0) - the membrane proton channel. CF(1) has five subunits: alpha(3), beta(3), gamma(1), delta(1), epsilon(1). CF(0) has three main subunits: a, b and c.

The protein resides in the cell membrane. Functionally, produces ATP from ADP in the presence of a proton gradient across the membrane. The chain is ATP synthase epsilon chain from Natranaerobius thermophilus (strain ATCC BAA-1301 / DSM 18059 / JW/NM-WN-LF).